The following is a 532-amino-acid chain: Tegument protein UL21 (532 aa).

Residues 251–276 (SPSVSSAPPPSAPDASLPPPGLQEAA) form a disordered region. Residues 257–276 (APPPSAPDASLPPPGLQEAA) show a composition bias toward pro residues.

It belongs to the alphaherpesvirinae UL21 protein family. Interacts (via C-terminus) with UL16.

It is found in the virion tegument. The protein resides in the host cytoplasm. Its subcellular location is the host nucleus. Its function is as follows. May participate in DNA packaging/capsid maturation events. Promotes efficient incorporation of tegument proteins UL46, UL49, and US3 into virions. May also play a role in capsid transport to the trans-Golgi network (TGN). In Human herpesvirus 2 (strain HG52) (HHV-2), this protein is Tegument protein UL21.